A 1036-amino-acid chain; its full sequence is Isoleucine--tRNA ligase (1036 aa).

The 'HIGH' region motif lies at Pro-46 to His-56. A 'KMSKS' region motif is present at residues Lys-589–Arg-593. Lys-592 serves as a coordination point for ATP.

This sequence belongs to the class-I aminoacyl-tRNA synthetase family. IleS type 2 subfamily. As to quaternary structure, monomer. Zn(2+) serves as cofactor.

Its subcellular location is the cytoplasm. The catalysed reaction is tRNA(Ile) + L-isoleucine + ATP = L-isoleucyl-tRNA(Ile) + AMP + diphosphate. Its function is as follows. Catalyzes the attachment of isoleucine to tRNA(Ile). As IleRS can inadvertently accommodate and process structurally similar amino acids such as valine, to avoid such errors it has two additional distinct tRNA(Ile)-dependent editing activities. One activity is designated as 'pretransfer' editing and involves the hydrolysis of activated Val-AMP. The other activity is designated 'posttransfer' editing and involves deacylation of mischarged Val-tRNA(Ile). This Chlamydia trachomatis serovar L2b (strain UCH-1/proctitis) protein is Isoleucine--tRNA ligase.